Here is a 218-residue protein sequence, read N- to C-terminus: 3-dehydroquinate dehydratase (218 aa).

3-dehydroquinate is bound by residues 29-31 (EFR) and R56. Catalysis depends on H116, which acts as the Proton donor/acceptor. K142 (schiff-base intermediate with substrate) is an active-site residue. Residues R180, S200, and Q204 each contribute to the 3-dehydroquinate site.

Belongs to the type-I 3-dehydroquinase family. In terms of assembly, homodimer.

It carries out the reaction 3-dehydroquinate = 3-dehydroshikimate + H2O. Its pathway is metabolic intermediate biosynthesis; chorismate biosynthesis; chorismate from D-erythrose 4-phosphate and phosphoenolpyruvate: step 3/7. In terms of biological role, involved in the third step of the chorismate pathway, which leads to the biosynthesis of aromatic amino acids. Catalyzes the cis-dehydration of 3-dehydroquinate (DHQ) and introduces the first double bond of the aromatic ring to yield 3-dehydroshikimate. This is 3-dehydroquinate dehydratase from Methanococcus maripaludis (strain C6 / ATCC BAA-1332).